We begin with the raw amino-acid sequence, 269 residues long: Proline-rich protein 7 (269 aa).

The Extracellular portion of the chain corresponds to Met1–Thr9. The interval Met1 to Glu44 is required for interaction with NMDA receptors. The interval Val2–Lys39 is required for membrane localization. The helical; Signal-anchor for type III membrane protein transmembrane segment at Phe10–Phe30 threads the bilayer. The Cytoplasmic segment spans residues Cys31–Val269. 2 disordered regions span residues Gly63–Leu83 and Pro97–Pro121. Ser64 carries the phosphoserine modification. Positions Ala108 to Leu117 are enriched in basic residues. The interval Pro146–Thr166 is required for internalization. The tract at residues Pro146–Val269 is required for apoptosis induction. A PDZ-binding motif is present at residues Thr267–Val269.

Forms a complex with NMDA receptor zeta subunit GRIN1 and epsilon subunit GRIN2B. Interacts with GRIN2B. Interacts with GRIN1; the interaction is reduced upon NMDA receptor activity. Found in a postsynaptic membrane complex with DLG4 and GRIN1. Interacts with DLG4 (via PDZ3 domain and to lesser degree via PDZ2 domain). Interacts with JUN. Found in a complex with JUN and FBXW7. Interacts with JUN and FBXW7; the interaction inhibits ubiquitination-mediated JUN degradation promoting its phosphorylation and transcriptional activity. Interacts with SRC. Post-translationally, palmitoylated. Tyrosine phosphorylated, possibly by SRC. In terms of tissue distribution, highly expressed in brain, moderately expressed in lymph nodes and T cells and low expression in thymus and spleen. Expressed in single positive progenitor thymocytes, particularly in CD8 single positive thymocytes.

Its subcellular location is the cell membrane. It is found in the postsynaptic cell membrane. The protein localises to the postsynaptic density membrane. It localises to the cytoplasm. The protein resides in the perinuclear region. Its subcellular location is the synapse. It is found in the cell projection. The protein localises to the dendrite. It localises to the nucleus. In terms of biological role, acts as a synapse-to-nucleus messenger to promote NMDA receptor-mediated excitotoxicity in neurons in a JUN-dependent manner. Inhibits ubiquitination-mediated degradation and promotes phosphorylation and transcriptional activity of transcription factor JUN. Might play a redundant role in the regulation of T cell receptor signaling. Might promote apoptosis in T cells. This Mus musculus (Mouse) protein is Proline-rich protein 7 (Prr7).